The primary structure comprises 319 residues: Structure-specific endonuclease subunit SLX1 (319 aa).

The GIY-YIG domain maps to 20-103 (TFYCCYLLQS…QHGYKTHYIP (84 aa)). The segment at 233–297 (CNLCGQCYDY…LPNFCMCPGC (65 aa)) adopts an SLX1-type zinc-finger fold.

It belongs to the SLX1 family. Forms a heterodimer with SLX4. The cofactor is a divalent metal cation.

The protein localises to the nucleus. Catalytic subunit of the SLX1-SLX4 structure-specific endonuclease that resolves DNA secondary structures generated during DNA repair and recombination. Has endonuclease activity towards branched DNA substrates, introducing single-strand cuts in duplex DNA close to junctions with ss-DNA. This is Structure-specific endonuclease subunit SLX1 from Vanderwaltozyma polyspora (strain ATCC 22028 / DSM 70294 / BCRC 21397 / CBS 2163 / NBRC 10782 / NRRL Y-8283 / UCD 57-17) (Kluyveromyces polysporus).